The following is a 180-amino-acid chain: uncharacterized protein (180 aa).

This sequence to H.influenzae HI_0656.1.

This is an uncharacterized protein from Escherichia coli (strain K12).